We begin with the raw amino-acid sequence, 537 residues long: O-phosphoserine--tRNA(Cys) ligase (537 aa).

Substrate contacts are provided by residues 186–188 (HMT), 231–233 (SAS), 273–274 (YY), and Asn317.

This sequence belongs to the class-II aminoacyl-tRNA synthetase family. O-phosphoseryl-tRNA(Cys) synthetase subfamily. In terms of assembly, homotetramer. Interacts with SepCysS.

It carries out the reaction tRNA(Cys) + O-phospho-L-serine + ATP = O-phospho-L-seryl-tRNA(Cys) + AMP + diphosphate. Functionally, catalyzes the attachment of O-phosphoserine (Sep) to tRNA(Cys). The chain is O-phosphoserine--tRNA(Cys) ligase from Methanococcus maripaludis (strain C5 / ATCC BAA-1333).